We begin with the raw amino-acid sequence, 228 residues long: Ribosomal RNA large subunit methyltransferase E (228 aa).

The S-adenosyl-L-methionine site is built by glycine 76, tryptophan 78, aspartate 99, aspartate 115, and aspartate 139. Lysine 179 functions as the Proton acceptor in the catalytic mechanism.

This sequence belongs to the class I-like SAM-binding methyltransferase superfamily. RNA methyltransferase RlmE family.

It localises to the cytoplasm. The enzyme catalyses uridine(2552) in 23S rRNA + S-adenosyl-L-methionine = 2'-O-methyluridine(2552) in 23S rRNA + S-adenosyl-L-homocysteine + H(+). Functionally, specifically methylates the uridine in position 2552 of 23S rRNA at the 2'-O position of the ribose in the fully assembled 50S ribosomal subunit. The sequence is that of Ribosomal RNA large subunit methyltransferase E from Bradyrhizobium diazoefficiens (strain JCM 10833 / BCRC 13528 / IAM 13628 / NBRC 14792 / USDA 110).